The following is a 307-amino-acid chain: Replication termination factor 2 (307 aa).

The disordered stretch occupies residues A193–S296. The segment covering G227 to S241 has biased composition (basic and acidic residues). The residue at position 288 (S288) is a Phosphoserine.

This sequence belongs to the rtf2 family. As to quaternary structure, interacts with DDI2; probably also interacts with DDI1. In terms of processing, undergoes proteasomal degradation, via DDI1 and DDI2. Removal from stalled replisomes and degradation are required for genome stability.

The protein resides in the chromosome. Replication termination factor which is a component of the elongating replisome. Required for ATR pathway signaling upon DNA damage and has a positive activity during DNA replication. Might function to facilitate fork pausing at replication fork barriers like the rDNA. May be globally required to stimulate ATR signaling after the fork stalls or encounters a lesion. Interacts with nascent DNA. The protein is Replication termination factor 2 of Mus musculus (Mouse).